A 69-amino-acid chain; its full sequence is Small ribosomal subunit protein uS7 (69 aa).

This sequence belongs to the universal ribosomal protein uS7 family. As to quaternary structure, part of the 30S ribosomal subunit.

One of the primary rRNA binding proteins, it binds directly to 16S rRNA where it nucleates assembly of the head domain of the 30S subunit. Is located at the subunit interface close to the decoding center. The polypeptide is Small ribosomal subunit protein uS7 (rps7) (Methanococcoides methylutens).